A 206-amino-acid polypeptide reads, in one-letter code: Protein Nef (206 aa).

A lipid anchor (N-myristoyl glycine; by host) is attached at glycine 2. The residue at position 6 (serine 6) is a Phosphoserine; by host. The segment at 62 to 66 is acidic; interacts with host PACS1 and PACS2; stabilizes the interaction of NEF/MHC-I with host AP1M1; necessary for MHC-I internalization; sequence EESDE. The interval 70–79 is SH3-binding; interaction with Src family tyrosine kinases; the sequence is PVRPQVPLRP. Residues 73–76 carry the PxxP; stabilizes the interaction of NEF/MHC-I with host AP1M1; necessary for MHC-I internalization motif; that stretch reads PQVP. Residues 109 to 125 are mediates dimerization, Nef-PTE1 interaction; sequence EILDLWVYNTQGIFPDW. The interval 149 to 181 is binding to ATP6V1H; the sequence is VDPQEVEEDTEGETNSLLHPICQHGMEDPERQV. The Dileucine internalization motif; necessary for CD4 internalization signature appears at 165–166; that stretch reads LL. The short motif at 175–176 is the Diacidic; necessary for CD4 internalization element; the sequence is ED.

This sequence belongs to the lentivirus primate group Nef protein family. As to quaternary structure, monomer; cytosolic form. Homodimer; membrane bound form. Interacts with Nef associated p21-activated kinase (PAK2); this interaction activates PAK2. Associates with the Nef-MHC-I-AP1 complex; this complex is required for MHC-I internalization. Interacts (via C-terminus) with host PI3-kinase. Interacts with host PACS1; this interaction seems to be weak. Interacts with host PACS2. Interacts with host LCK and MAPK3; these interactions inhibit the kinase activity of the latter. Interacts with host ATP6V1H; this interaction may play a role in CD4 endocytosis. Associates with the CD4-Nef-AP2 complex; this complex is required for CD4 internalization. Interacts with host AP2 subunit alpha and AP2 subunit sigma2. Interacts with TCR-zeta chain; this interaction up-regulates the Fas ligand (FasL) surface expression. Interacts with host HCK, LYN, and SRC; these interactions activate the Src family kinases. Interacts with MAP3K5; this interaction inhibits the Fas and TNFR-mediated death signals. Interacts with beta-COP and PTE1. Interacts with human RACK1; this increases Nef phosphorylation by PKC. Interacts with TP53; this interaction decreases the half-life of TP53, protecting the infected cell against p53-mediated apoptosis. The virion-associated Nef proteins are cleaved by the viral protease to release the soluble C-terminal core protein. Nef is probably cleaved concomitantly with viral structural proteins on maturation of virus particles. In terms of processing, myristoylated. Post-translationally, phosphorylated on serine residues, probably by host PKCdelta and theta.

It localises to the host cell membrane. The protein localises to the virion. It is found in the secreted. The protein resides in the host Golgi apparatus membrane. Its function is as follows. Factor of infectivity and pathogenicity, required for optimal virus replication. Alters numerous pathways of T-lymphocyte function and down-regulates immunity surface molecules in order to evade host defense and increase viral infectivity. Alters the functionality of other immunity cells, like dendritic cells, monocytes/macrophages and NK cells. In infected CD4(+) T-lymphocytes, down-regulates the surface MHC-I, mature MHC-II, CD4, CD28, CCR5 and CXCR4 molecules. Mediates internalization and degradation of host CD4 through the interaction of with the cytoplasmic tail of CD4, the recruitment of AP-2 (clathrin adapter protein complex 2), internalization through clathrin coated pits, and subsequent transport to endosomes and lysosomes for degradation. Diverts host MHC-I molecules to the trans-Golgi network-associated endosomal compartments by an endocytic pathway to finally target them for degradation. MHC-I down-regulation may involve AP-1 (clathrin adapter protein complex 1) or possibly Src family kinase-ZAP70/Syk-PI3K cascade recruited by PACS2. In consequence infected cells are masked for immune recognition by cytotoxic T-lymphocytes. Decreasing the number of immune receptors also prevents reinfection by more HIV particles (superinfection). Down-regulates host SERINC3 and SERINC5 thereby excluding these proteins from the viral particles. Virion infectivity is drastically higher when SERINC3 or SERINC5 are excluded from the viral envelope, because these host antiviral proteins impair the membrane fusion event necessary for subsequent virion penetration. Functionally, bypasses host T-cell signaling by inducing a transcriptional program nearly identical to that of anti-CD3 cell activation. Interaction with TCR-zeta chain up-regulates the Fas ligand (FasL). Increasing surface FasL molecules and decreasing surface MHC-I molecules on infected CD4(+) cells send attacking cytotoxic CD8+ T-lymphocytes into apoptosis. In terms of biological role, plays a role in optimizing the host cell environment for viral replication without causing cell death by apoptosis. Protects the infected cells from apoptosis in order to keep them alive until the next virus generation is ready to strike. Inhibits the Fas and TNFR-mediated death signals by blocking MAP3K5/ASK1. Decreases the half-life of TP53, protecting the infected cell against p53-mediated apoptosis. Inhibits the apoptotic signals regulated by the Bcl-2 family proteins through the formation of a Nef/PI3-kinase/PAK2 complex that leads to activation of PAK2 and induces phosphorylation of host BAD. Its function is as follows. Extracellular Nef protein targets CD4(+) T-lymphocytes for apoptosis by interacting with CXCR4 surface receptors. The polypeptide is Protein Nef (Homo sapiens (Human)).